The following is a 220-amino-acid chain: UPF0319 protein Ent638_1476 (220 aa).

The signal sequence occupies residues 1–20 (MKTGIVSAVLALVMPVCVYA).

The protein belongs to the UPF0319 family.

This chain is UPF0319 protein Ent638_1476, found in Enterobacter sp. (strain 638).